A 339-amino-acid polypeptide reads, in one-letter code: Probable cytosolic iron-sulfur protein assembly protein CIAO1 (339 aa).

WD repeat units follow at residues 14–53, 59–98, 103–142, 148–187, 192–231, 250–289, and 301–339; these read HPDS…WICK, GHQR…FECV, GHEN…EYEC, SHTQ…WVCC, GHES…NEQG, FHSR…DPQQ, and AHSQ…SEGI. Positions 176 to 178 match the LYR motif; required for interaction with HSC20 motif; the sequence is LYR.

This sequence belongs to the WD repeat CIA1 family. Component of the CIA complex. Interacts with CIAO2A and forms a complex with CIAO2B and MMS19; the interactions with CIAO2A and CIAO2B are mutually exclusive. Interacts with CHD1L, ERCC2, IREB2 and POLD1. Component of the MMXD complex, which includes CIAO1, ERCC2, CIAO2B, MMS19 and SLC25A5. Interacts with WT1. Interacts with CIAO3. Interacts (via LYR motif) with HSC20.

It is found in the cytoplasm. Its function is as follows. Key component of the cytosolic iron-sulfur protein assembly (CIA) complex, a multiprotein complex that mediates the incorporation of iron-sulfur cluster into extramitochondrial Fe/S proteins. As a CIA complex component, interacts specifically with CIAO2A or CIAO2B and MMS19 to assist different branches of iron-sulfur protein assembly, depending of its interactors. The complex CIAO1:CIAO2B:MMS19 binds to and facilitates the assembly of most cytosolic-nuclear Fe/S proteins. CIAO1:CIAO2A specifically matures ACO1 and stabilizes IREB2. Seems to specifically modulate the transactivation activity of WT1. As part of the mitotic spindle-associated MMXD complex it may play a role in chromosome segregation. This Bos taurus (Bovine) protein is Probable cytosolic iron-sulfur protein assembly protein CIAO1.